The sequence spans 185 residues: Ribosome-recycling factor (185 aa).

This sequence belongs to the RRF family.

Its subcellular location is the cytoplasm. In terms of biological role, responsible for the release of ribosomes from messenger RNA at the termination of protein biosynthesis. May increase the efficiency of translation by recycling ribosomes from one round of translation to another. The protein is Ribosome-recycling factor of Kocuria rhizophila (strain ATCC 9341 / DSM 348 / NBRC 103217 / DC2201).